The primary structure comprises 217 residues: Protein matrimony (217 aa).

The short motif at 39–41 (STP) is the POLO box domain (PBD)-binding element. Residues S63 and S66 each carry the phosphoserine modification. The segment at 83 to 106 (KQQQQQQHQHCHRTQLKPPPFVLP) is disordered. The 61-residue stretch at 157–217 (NHAANVEQIL…NRIMDVLHTL (61 aa)) folds into the SAM domain.

Interacts with polo. Interacts with cort. In terms of processing, probably ubiquitinated: degraded during the oocyte-to-embryo transition by the anaphase promoting complex/cyclosome (APC/C) containing cort protein.

The protein resides in the nucleus. It is found in the chromosome. Functionally, polo kinase inhibitor required to maintain G2 arrest in the meiotic cell cycle in females. Holds heterochromatically paired homologs together from the end of pachytene until metaphase I. Haploinsufficient locus for homologous achiasmate segregation and may be required for the maintenance of heterochromatic pairings. This Drosophila melanogaster (Fruit fly) protein is Protein matrimony.